A 337-amino-acid chain; its full sequence is Schlafen family member 1 (337 aa).

The tract at residues A147 to E166 is disordered. Residues P156–E166 are compositionally biased toward basic and acidic residues.

The protein belongs to the Schlafen family. Interacts with DNAJB6; promoting nuclear translocation and ability to promote cell-cycle arrest. In terms of tissue distribution, mainly expressed in the thymus, lymph node and spleen. Specifically expressed in T-lineage cells, but not in B-cells. Strongly up-regulated during the differentiation from CD4(+)CD8(+) double-positive (DP) to CD4(+) or CD8(+) single-positive (SP) thymocytes. Highly expressed in quiescent single-positive thymocytes and T-cells. The expression substantially decreases after TCR (T-cell receptor)-mediated activation.

The protein resides in the cytoplasm. It is found in the nucleus. Its function is as follows. Protein expressed in resting T-cells, which is required for maintaining T-cells in the quiescent state. Acts by promoting cell-cycle arrest of T-cells through inhibiting the expression of cyclin-D1 (CCND1). This is Schlafen family member 1 from Mus musculus (Mouse).